The primary structure comprises 421 residues: Enolase 1 (421 aa).

Residue Gln164 participates in (2R)-2-phosphoglycerate binding. Glu206 functions as the Proton donor in the catalytic mechanism. Residues Asp243, Glu287, and Asp314 each contribute to the Mg(2+) site. (2R)-2-phosphoglycerate-binding residues include Lys339, Arg368, Ser369, and Lys390. The Proton acceptor role is filled by Lys339.

It belongs to the enolase family. As to quaternary structure, component of the RNA degradosome, a multiprotein complex involved in RNA processing and mRNA degradation. Mg(2+) serves as cofactor.

The protein localises to the cytoplasm. It is found in the secreted. It localises to the cell surface. It catalyses the reaction (2R)-2-phosphoglycerate = phosphoenolpyruvate + H2O. The protein operates within carbohydrate degradation; glycolysis; pyruvate from D-glyceraldehyde 3-phosphate: step 4/5. Functionally, catalyzes the reversible conversion of 2-phosphoglycerate (2-PG) into phosphoenolpyruvate (PEP). It is essential for the degradation of carbohydrates via glycolysis. The sequence is that of Enolase 1 from Methylococcus capsulatus (strain ATCC 33009 / NCIMB 11132 / Bath).